A 413-amino-acid polypeptide reads, in one-letter code: S-adenosylmethionine synthase (413 aa).

Residue His15 coordinates ATP. Residue Asp17 coordinates Mg(2+). Glu43 lines the K(+) pocket. Positions 56 and 100 each coordinate L-methionine. The tract at residues 100-110 (QSPDISQGVNE) is flexible loop. Residues 171–173 (DGK), 248–249 (KF), Asp257, 263–264 (RK), Ala280, and Lys284 each bind ATP. Residue Asp257 coordinates L-methionine. Position 288 (Lys288) interacts with L-methionine.

The protein belongs to the AdoMet synthase family. In terms of assembly, homotetramer; dimer of dimers. Mg(2+) serves as cofactor. K(+) is required as a cofactor.

It localises to the cytoplasm. It catalyses the reaction L-methionine + ATP + H2O = S-adenosyl-L-methionine + phosphate + diphosphate. Its pathway is amino-acid biosynthesis; S-adenosyl-L-methionine biosynthesis; S-adenosyl-L-methionine from L-methionine: step 1/1. In terms of biological role, catalyzes the formation of S-adenosylmethionine (AdoMet) from methionine and ATP. The overall synthetic reaction is composed of two sequential steps, AdoMet formation and the subsequent tripolyphosphate hydrolysis which occurs prior to release of AdoMet from the enzyme. The polypeptide is S-adenosylmethionine synthase (Prochlorococcus marinus (strain AS9601)).